A 1008-amino-acid polypeptide reads, in one-letter code: Collagen, type I, alpha 1a (1008 aa).

A compositionally biased stretch (pro residues) spans 1–21; that stretch reads SPAMPVPGPMGPMGPRGPPGS. Positions 1–920 are disordered; it reads SPAMPVPGPM…PQEKAPDPFR (920 aa). Over residues 39-53 the composition is skewed to basic and acidic residues; the sequence is NGEDGESGKPGRGGE. Low complexity predominate over residues 92-117; sequence TPGAMGPRGAAGAAGARGNDGAAGAA. The span at 119 to 132 shows a compositional bias: pro residues; sequence PPGPTGPAGPPGFP. A compositionally biased stretch (gly residues) spans 133–151; it reads GGPGAKGDAGAQGGRGPEG. 2 stretches are compositionally biased toward low complexity: residues 152–195 and 204–230; these read PAGA…AGAP and SGPQ…APGV. Residues 253–265 show a composition bias toward gly residues; that stretch reads GARGGPGGRGFPG. Low complexity-rich tracts occupy residues 339 to 354 and 410 to 422; these read VGAR…PGPK and LPGE…PAGA. Over residues 423–435 the composition is skewed to basic and acidic residues; sequence RGDRGFPGERGAK. Low complexity-rich tracts occupy residues 437-456, 489-524, and 537-573; these read DAGA…QGMP, RGLT…ARGA, and AGFA…AGPT. Residues 604–617 show a composition bias toward pro residues; it reads PPGPSGNPGPPGPA. Over residues 634–661 the composition is skewed to low complexity; it reads PAGRPGELGAAGPPGPAGEKGSPGSEGA. Residues 696 to 709 are compositionally biased toward gly residues; it reads GEAGGPSGPGGERG. Low complexity predominate over residues 717-735; that stretch reads PGLAGAPGEPGREGSPGNE. Residues 761–771 show a composition bias toward pro residues; sequence APGPPGAPGPV. Over residues 785 to 806 the composition is skewed to low complexity; the sequence is PAGPAGSAGPSGPRGPAGAPGL. Over residues 807-821 the composition is skewed to basic and acidic residues; that stretch reads RGDKGESGEAGERRG. The span at 832 to 868 shows a compositional bias: low complexity; that stretch reads SGSSGEQGPAGAAGPAGPRGPAGSAGSPGKDGMSGLP. Over residues 884 to 896 the composition is skewed to pro residues; it reads AGPPGPPGPPGAP. The Fibrillar collagen NC1 domain occupies 978–1008; sequence TSRLPLLDLAPMDVGAPDQEFGLEVGPVCFL.

The protein belongs to the fibrillar collagen family.

It localises to the secreted. The protein localises to the extracellular space. The protein resides in the extracellular matrix. This chain is Collagen, type I, alpha 1a, found in Epinephelus aeneus (White grouper).